A 90-amino-acid polypeptide reads, in one-letter code: Small ribosomal subunit protein bS16 (90 aa).

Belongs to the bacterial ribosomal protein bS16 family.

This Lactobacillus acidophilus (strain ATCC 700396 / NCK56 / N2 / NCFM) protein is Small ribosomal subunit protein bS16.